Reading from the N-terminus, the 323-residue chain is Ferrochelatase (323 aa).

Fe cation contacts are provided by His-196 and Glu-277.

The protein belongs to the ferrochelatase family.

The protein localises to the cytoplasm. The catalysed reaction is heme b + 2 H(+) = protoporphyrin IX + Fe(2+). It functions in the pathway porphyrin-containing compound metabolism; protoheme biosynthesis; protoheme from protoporphyrin-IX: step 1/1. In terms of biological role, catalyzes the ferrous insertion into protoporphyrin IX. In Haemophilus influenzae (strain PittEE), this protein is Ferrochelatase.